We begin with the raw amino-acid sequence, 395 residues long: Tyrosine--tRNA ligase (395 aa).

The 'HIGH' region signature appears at 42 to 51 (PTAPDIHLGH). The 'KMSKS' region signature appears at 226–230 (KMSKS). K229 is an ATP binding site. Residues 334–394 (IGLANLLKEA…GKRKFARVTV (61 aa)) form the S4 RNA-binding domain.

The protein belongs to the class-I aminoacyl-tRNA synthetase family. TyrS type 2 subfamily. As to quaternary structure, homodimer.

The protein resides in the cytoplasm. It catalyses the reaction tRNA(Tyr) + L-tyrosine + ATP = L-tyrosyl-tRNA(Tyr) + AMP + diphosphate + H(+). Catalyzes the attachment of tyrosine to tRNA(Tyr) in a two-step reaction: tyrosine is first activated by ATP to form Tyr-AMP and then transferred to the acceptor end of tRNA(Tyr). The sequence is that of Tyrosine--tRNA ligase from Mannheimia succiniciproducens (strain KCTC 0769BP / MBEL55E).